We begin with the raw amino-acid sequence, 1723 residues long: Lymphocyte antigen 75 (1723 aa).

Positions 1–27 (MRTGRVTPGLAAGLLLLLLRSFGLVEP) are cleaved as a signal peptide. Topologically, residues 28–1667 (SESSGNDPFT…AVCKIPLSPD (1640 aa)) are extracellular. Residues 33-182 (NDPFTIVHEN…FLIGETWYHD (150 aa)) enclose the Ricin B-type lectin domain. Asn-135 carries N-linked (GlcNAc...) asparagine glycosylation. A Fibronectin type-II domain is found at 164-211 (SYGRPCEFPFLIGETWYHDCIHDEDHSGPWCATTLSYEYDQKWGICLL). 4 disulfides stabilise this stretch: Cys-169-Cys-194, Cys-183-Cys-209, Cys-247-Cys-340, and Cys-317-Cys-332. A C-type lectin 1 domain is found at 225–341 (QIGSCYQFNN…CESQQPYVCK (117 aa)). Residues Asn-345 and Asn-377 are each glycosylated (N-linked (GlcNAc...) asparagine). C-type lectin domains lie at 368-486 (NNGF…YVCK), 493-625 (KDAE…ICKK), and 652-791 (SSLS…WVCQ). Disulfide bonds link Cys-389/Cys-485 and Cys-462/Cys-477. Asn-529 is a glycosylation site (N-linked (GlcNAc...) asparagine). 3 disulfide bridges follow: Cys-597-Cys-614, Cys-678-Cys-790, and Cys-752-Cys-782. N-linked (GlcNAc...) asparagine glycosylation is found at Asn-843 and Asn-865. Tyr-934 is subject to Phosphotyrosine. 3 N-linked (GlcNAc...) asparagine glycosylation sites follow: Asn-935, Asn-1077, and Asn-1104. The 134-residue stretch at 959–1092 (FQNKCFLKVN…ERHSLSLCQK (134 aa)) folds into the C-type lectin 5 domain. Residues Cys-1061 and Cys-1081 are joined by a disulfide bond. The C-type lectin 6 domain maps to 1111–1223 (YLNNLYKIIS…DNQPGAICYY (113 aa)). A disulfide bridge connects residues Cys-1198 and Cys-1212. Residues Asn-1226, Asn-1321, and Asn-1393 are each glycosylated (N-linked (GlcNAc...) asparagine). The region spanning 1252-1375 (FQNSCYNFMI…VIEETLHFYQ (124 aa)) is the C-type lectin 7 domain. C-type lectin domains are found at residues 1402-1514 (YKDG…ICYK) and 1543-1662 (YGGH…VCKI). Cys-1489 and Cys-1503 are oxidised to a cystine. Residues Asn-1594 and Asn-1627 are each glycosylated (N-linked (GlcNAc...) asparagine). A disulfide bridge links Cys-1636 with Cys-1651. A helical membrane pass occupies residues 1668–1692 (YTGIAILFAVLCLLGLISLAIWFLL). Residues 1693–1723 (QRSHIRWTGFSSVRYEHGTNEDEVMLPSFHD) are Cytoplasmic-facing. Ser-1704 and Ser-1720 each carry phosphoserine.

In terms of processing, N-glycosylated. In terms of tissue distribution, expressed in dendritic and thymic epithelial cells and lymph nodes.

The protein resides in the membrane. Acts as an endocytic receptor to direct captured antigens from the extracellular space to a specialized antigen-processing compartment. Causes reduced proliferation of B lymphocytes. This is Lymphocyte antigen 75 (Ly75) from Mus musculus (Mouse).